A 285-amino-acid polypeptide reads, in one-letter code: uncharacterized protein (285 aa).

Residues 197 to 217 traverse the membrane as a helical segment; the sequence is PTIGALLSLVSAFFSFIPFLM.

Its subcellular location is the membrane. This is an uncharacterized protein from Saccharomyces cerevisiae (strain ATCC 204508 / S288c) (Baker's yeast).